A 406-amino-acid chain; its full sequence is Acetylornithine/succinyldiaminopimelate aminotransferase (406 aa).

Pyridoxal 5'-phosphate contacts are provided by residues 108–109 and phenylalanine 141; that span reads GT. Arginine 144 is a N(2)-acetyl-L-ornithine binding site. A pyridoxal 5'-phosphate-binding site is contributed by 226–229; the sequence is DEVQ. At lysine 255 the chain carries N6-(pyridoxal phosphate)lysine. Serine 283 lines the N(2)-acetyl-L-ornithine pocket. Threonine 284 contributes to the pyridoxal 5'-phosphate binding site.

Belongs to the class-III pyridoxal-phosphate-dependent aminotransferase family. ArgD subfamily. As to quaternary structure, homodimer. It depends on pyridoxal 5'-phosphate as a cofactor.

The protein resides in the cytoplasm. The enzyme catalyses N(2)-acetyl-L-ornithine + 2-oxoglutarate = N-acetyl-L-glutamate 5-semialdehyde + L-glutamate. It catalyses the reaction N-succinyl-(2S,6S)-2,6-diaminopimelate + 2-oxoglutarate = (S)-2-succinylamino-6-oxoheptanedioate + L-glutamate. It functions in the pathway amino-acid biosynthesis; L-arginine biosynthesis; N(2)-acetyl-L-ornithine from L-glutamate: step 4/4. It participates in amino-acid biosynthesis; L-lysine biosynthesis via DAP pathway; LL-2,6-diaminopimelate from (S)-tetrahydrodipicolinate (succinylase route): step 2/3. In terms of biological role, involved in both the arginine and lysine biosynthetic pathways. This Escherichia coli O6:H1 (strain CFT073 / ATCC 700928 / UPEC) protein is Acetylornithine/succinyldiaminopimelate aminotransferase.